A 282-amino-acid chain; its full sequence is Phosphatidylglycerol--prolipoprotein diacylglyceryl transferase (282 aa).

3 helical membrane-spanning segments follow: residues 18-38, 55-75, and 89-109; these read LSIK…YFIA, VIFY…VIFQ, and IWHG…TGII. Residue R137 coordinates a 1,2-diacyl-sn-glycero-3-phospho-(1'-sn-glycerol). 2 helical membrane passes run 203–223 and 235–255; these read VGET…FVEG and IRVA…ILIY.

It belongs to the Lgt family.

It is found in the cell membrane. The catalysed reaction is L-cysteinyl-[prolipoprotein] + a 1,2-diacyl-sn-glycero-3-phospho-(1'-sn-glycerol) = an S-1,2-diacyl-sn-glyceryl-L-cysteinyl-[prolipoprotein] + sn-glycerol 1-phosphate + H(+). Its pathway is protein modification; lipoprotein biosynthesis (diacylglyceryl transfer). Its function is as follows. Catalyzes the transfer of the diacylglyceryl group from phosphatidylglycerol to the sulfhydryl group of the N-terminal cysteine of a prolipoprotein, the first step in the formation of mature lipoproteins. The sequence is that of Phosphatidylglycerol--prolipoprotein diacylglyceryl transferase from Staphylococcus haemolyticus (strain JCSC1435).